Reading from the N-terminus, the 334-residue chain is Small ribosomal subunit protein RACK1z (334 aa).

WD repeat units follow at residues 16–47 (GHND…LVWD), 73–103 (GHSH…RLWD), 115–145 (GHDK…KLWN), 163–195 (GHNG…KVWN), 207–237 (GHGG…LLWD), 248–277 (DAGS…KIWD), and 296–326 (NQML…RIYK).

This sequence belongs to the WD repeat G protein beta family. Ribosomal protein RACK1 subfamily. In terms of assembly, interacts with RAC1, RAC3, RAC6, RAR1, SGT1 and RBOHB. Homodimer and heterodimer with RACK1B. Widely expressed.

The protein resides in the cytoplasm. It localises to the cell membrane. Its function is as follows. Component of the RACK1 regulatory proteins that functions in innate immunity by interacting with multiple proteins in the RAC1 immune complex. Acts as a positive regulator of reactive oxygen species (ROS) production and is required for resistance against rice blast (M.grisea) infection. The chain is Small ribosomal subunit protein RACK1z (RACK1A) from Oryza sativa subsp. japonica (Rice).